The primary structure comprises 122 residues: MSLTNEQIVDAIAEKSLMEVMELVKAIEEKFGVSAAAPVAVAAAAGPAAAVEEQTEFTVTLKSAGDKKVEVIKAVRAITGLGLKEAKDLAEAGGVLKEGASKEDAEKMKKDLEAAGATVEVK.

This sequence belongs to the bacterial ribosomal protein bL12 family. Homodimer. Part of the ribosomal stalk of the 50S ribosomal subunit. Forms a multimeric L10(L12)X complex, where L10 forms an elongated spine to which 2 to 4 L12 dimers bind in a sequential fashion. Binds GTP-bound translation factors.

In terms of biological role, forms part of the ribosomal stalk which helps the ribosome interact with GTP-bound translation factors. Is thus essential for accurate translation. This is Large ribosomal subunit protein bL12 from Stenotrophomonas maltophilia (strain K279a).